The sequence spans 311 residues: Cytochrome f (311 aa).

Residues 1-27 (MKHFFKSLTLAIALAASVLFWSPQAQA) form the signal peptide. Heme-binding residues include tyrosine 28, cysteine 48, cysteine 51, and histidine 52. Residues 279 to 296 (WLLVFFAAITLSQILLVL) form a helical membrane-spanning segment.

Belongs to the cytochrome f family. In terms of assembly, the 4 large subunits of the cytochrome b6-f complex are cytochrome b6, subunit IV (17 kDa polypeptide, PetD), cytochrome f and the Rieske protein, while the 4 small subunits are PetG, PetL, PetM and PetN. The complex functions as a dimer. Heme is required as a cofactor.

The protein resides in the cellular thylakoid membrane. Functionally, component of the cytochrome b6-f complex, which mediates electron transfer between photosystem II (PSII) and photosystem I (PSI), cyclic electron flow around PSI, and state transitions. The sequence is that of Cytochrome f from Synechococcus elongatus.